A 476-amino-acid chain; its full sequence is UDP-N-acetylmuramate--L-alanine ligase (476 aa).

An ATP-binding site is contributed by 123–129 (GTHGKTT).

Belongs to the MurCDEF family.

It is found in the cytoplasm. The enzyme catalyses UDP-N-acetyl-alpha-D-muramate + L-alanine + ATP = UDP-N-acetyl-alpha-D-muramoyl-L-alanine + ADP + phosphate + H(+). It participates in cell wall biogenesis; peptidoglycan biosynthesis. Functionally, cell wall formation. In Nitrosococcus oceani (strain ATCC 19707 / BCRC 17464 / JCM 30415 / NCIMB 11848 / C-107), this protein is UDP-N-acetylmuramate--L-alanine ligase.